A 227-amino-acid polypeptide reads, in one-letter code: Cytidylate kinase (227 aa).

12 to 20 (GPSGAGKGT) contributes to the ATP binding site.

The protein belongs to the cytidylate kinase family. Type 1 subfamily.

It localises to the cytoplasm. It carries out the reaction CMP + ATP = CDP + ADP. It catalyses the reaction dCMP + ATP = dCDP + ADP. The sequence is that of Cytidylate kinase from Xanthomonas oryzae pv. oryzae (strain PXO99A).